Reading from the N-terminus, the 213-residue chain is Orotate phosphoribosyltransferase (213 aa).

Lysine 26 is a 5-phospho-alpha-D-ribose 1-diphosphate binding site. Position 34 to 35 (34 to 35 (FF)) interacts with orotate. Residues 72–73 (YK), arginine 99, lysine 100, lysine 103, histidine 105, and 124–132 (DDVITAGTA) contribute to the 5-phospho-alpha-D-ribose 1-diphosphate site. Orotate is bound by residues threonine 128 and arginine 156.

This sequence belongs to the purine/pyrimidine phosphoribosyltransferase family. PyrE subfamily. In terms of assembly, homodimer. Mg(2+) is required as a cofactor.

The enzyme catalyses orotidine 5'-phosphate + diphosphate = orotate + 5-phospho-alpha-D-ribose 1-diphosphate. The protein operates within pyrimidine metabolism; UMP biosynthesis via de novo pathway; UMP from orotate: step 1/2. Its function is as follows. Catalyzes the transfer of a ribosyl phosphate group from 5-phosphoribose 1-diphosphate to orotate, leading to the formation of orotidine monophosphate (OMP). This chain is Orotate phosphoribosyltransferase, found in Pseudomonas syringae pv. syringae (strain B728a).